We begin with the raw amino-acid sequence, 217 residues long: Probable transaldolase (217 aa).

The active-site Schiff-base intermediate with substrate is the lysine 83.

It belongs to the transaldolase family. Type 3B subfamily.

The protein localises to the cytoplasm. It catalyses the reaction D-sedoheptulose 7-phosphate + D-glyceraldehyde 3-phosphate = D-erythrose 4-phosphate + beta-D-fructose 6-phosphate. It participates in carbohydrate degradation; pentose phosphate pathway; D-glyceraldehyde 3-phosphate and beta-D-fructose 6-phosphate from D-ribose 5-phosphate and D-xylulose 5-phosphate (non-oxidative stage): step 2/3. Transaldolase is important for the balance of metabolites in the pentose-phosphate pathway. The chain is Probable transaldolase from Brucella abortus (strain S19).